A 217-amino-acid chain; its full sequence is Probable glutathione S-transferase (217 aa).

The 80-residue stretch at 2–81 (AEVKLLGLRY…YIDEAFEGPS (80 aa)) folds into the GST N-terminal domain. Glutathione contacts are provided by residues Ser-12, Lys-39, Ile-53, and 65–66 (ES). Residues 86 to 210 (DPYDRALARF…ELLIRYRAYI (125 aa)) form the GST C-terminal domain.

It belongs to the GST superfamily. HSP26 family.

It carries out the reaction RX + glutathione = an S-substituted glutathione + a halide anion + H(+). The sequence is that of Probable glutathione S-transferase (PRP1) from Solanum tuberosum (Potato).